Here is a 683-residue protein sequence, read N- to C-terminus: Hexamerin 70b (683 aa).

The signal sequence occupies residues 1 to 21 (MIVIMKAGFLFLASLCLLVQA). The region spanning 32-153 (VTRQKNIYEL…VAVIHRPDTK (122 aa)) is the Hemocyanin N-terminal domain. One can recognise a Hemocyanin middle domain in the interval 159 to 428 (PMYEVMPHLY…SIYKTILDYY (270 aa)). An N-linked (GlcNAc...) asparagine glycan is attached at Asn-203. Residues 437-673 (KYTTEELNFP…IHVKEVLVHH (237 aa)) form the Hemocyanin C-terminal domain.

The protein belongs to the hemocyanin/hexamerin family. As to quaternary structure, probable homohexamer. In terms of tissue distribution, expressed in the fat body and secreted into the hemolymph (at protein level). Present in trophocytes and oenocytes of the fat body (at protein level).

It localises to the secreted. The protein resides in the nucleus. It is found in the cytoplasm. Its subcellular location is the cytoplasmic granule. In terms of biological role, storage protein that may function as a nutrient supply to compensate for lack of dietary proteins during metamorphosis and egg production. The polypeptide is Hexamerin 70b (Apis mellifera (Honeybee)).